We begin with the raw amino-acid sequence, 570 residues long: Cytoplasmic polyadenylation element-binding protein 2 (570 aa).

Residues 434-516 enclose the RRM domain; that stretch reads LVAFIGGVPR…KRVEIKPYFF (83 aa).

Expressed specifically in the spermatogenic germ line.

Cytoplasmic polyadenylation element binding protein that binds to and regulates the translation of specific mRNAs. Not required for oogenesis. This is Cytoplasmic polyadenylation element-binding protein 2 (cpb-2) from Caenorhabditis elegans.